The following is a 754-amino-acid chain: MKETIQADWIKSEAFNLENCCNDNPLNILGPHFVNGQWITRVWMPEADEVNIIFKDKTYKTTTLNHKWLFEVTLPEDPKNNYQINVSRGGVSHSQQDPWAYRKEWMGELDRHLFAEGNHHHIWEKMGAHIHEETNQQGVMFCIWAPNAKSISIIGDINSWDGRHHPMQKRLGGIWELFMPIMKEGDAYKYEIRTQEGHIYEKADPYGFLHEIRPQNGSIVSKLNNFDWEDSSWITNRDSSSQINKPISVYEMHLGSWMHDSIENKYIEKNGQTRSPVPAADLKPGTRFLTYPELTEKLIPYVKERGFTHIELMPISEHPFDGSWGYQVTGWYAPTSRYGTPNEFKEFINRCHAEGIGVILDWVPGHFPKDKHGLAFFDGCHLYEHGDPRIGEHKEWGTLIFNYSRNEVRNFLVANLIYWFEEFHIDGIRVDAVASMLYRDYLRPEGEWIPNENGGNENLEAVKFLQQANHVLFQHFPGALSIAEESTTWPMVTEPTNVGGLGFNLKWNMGWMHDMLDYFEIDPWFRQFHQNSVTFSITYNYTENFMLALSHDEVVHGKSHLLHKMPGDDWKKFANTRALLTYMWTHPGKKTIFMGMEFGQRQEWNVWDDLQWELLEFEPHKGIRNLVDDLNKLYKNEPSLWKNDFDPYGFQWIDCNDTSNSVISFMRRENESNEWLVIVANFTPNFHGSYKIGVPLEGFYKEIFNSDGSKYGGSNKGNMGGKETLKYNIHNYENALEIVLPPLSVSIFKHQLKQ.

Aspartate 431 (nucleophile) is an active-site residue. Residue glutamate 484 is the Proton donor of the active site.

This sequence belongs to the glycosyl hydrolase 13 family. GlgB subfamily. In terms of assembly, monomer.

The enzyme catalyses Transfers a segment of a (1-&gt;4)-alpha-D-glucan chain to a primary hydroxy group in a similar glucan chain.. Its pathway is glycan biosynthesis; glycogen biosynthesis. Catalyzes the formation of the alpha-1,6-glucosidic linkages in glycogen by scission of a 1,4-alpha-linked oligosaccharide from growing alpha-1,4-glucan chains and the subsequent attachment of the oligosaccharide to the alpha-1,6 position. The polypeptide is 1,4-alpha-glucan branching enzyme GlgB (Prochlorococcus marinus subsp. pastoris (strain CCMP1986 / NIES-2087 / MED4)).